A 201-amino-acid chain; its full sequence is Small ribosomal subunit protein uS4c (201 aa).

Residues 89–152 (MRLDNILFRL…NSRTLVQNLI (64 aa)) enclose the S4 RNA-binding domain.

This sequence belongs to the universal ribosomal protein uS4 family. In terms of assembly, part of the 30S ribosomal subunit. Contacts protein S5. The interaction surface between S4 and S5 is involved in control of translational fidelity.

The protein localises to the plastid. It localises to the chloroplast. One of the primary rRNA binding proteins, it binds directly to 16S rRNA where it nucleates assembly of the body of the 30S subunit. Functionally, with S5 and S12 plays an important role in translational accuracy. The polypeptide is Small ribosomal subunit protein uS4c (rps4) (Crucihimalaya wallichii (Rock-cress)).